Consider the following 213-residue polypeptide: 2,3-bisphosphoglycerate-dependent phosphoglycerate mutase (213 aa).

Residues 8-15, 21-22, Arg-58, 84-87, Lys-95, 111-112, and 155-156 each bind substrate; these read RHGQSEWN, TG, ERNY, RR, and GN. His-9 (tele-phosphohistidine intermediate) is an active-site residue. Residue Glu-84 is the Proton donor/acceptor of the active site.

It belongs to the phosphoglycerate mutase family. BPG-dependent PGAM subfamily.

It carries out the reaction (2R)-2-phosphoglycerate = (2R)-3-phosphoglycerate. The protein operates within carbohydrate degradation; glycolysis; pyruvate from D-glyceraldehyde 3-phosphate: step 3/5. Catalyzes the interconversion of 2-phosphoglycerate and 3-phosphoglycerate. The polypeptide is 2,3-bisphosphoglycerate-dependent phosphoglycerate mutase (Cytophaga hutchinsonii (strain ATCC 33406 / DSM 1761 / CIP 103989 / NBRC 15051 / NCIMB 9469 / D465)).